The chain runs to 310 residues: Polyprenyl transferase ntnF (310 aa).

Helical transmembrane passes span 30–50, 63–83, 110–130, 154–174, 185–205, 230–250, 255–275, and 286–306; these read HTPEGLSTASIGWLALFFYAI, FLGIFACYQITHGVFCMWNDI, AMVAFIIGLALSLGVTYAMLG, IWAPQAVLGLTMAACVLPPWV, LPASLFGAIFSWLVYLDLIYA, ACLTVLGALQIAFFAVAAFEA, FLWVFGIAVWAISVPWSILSL, and IFLVNAILGIYLAAVSGTDVW.

This sequence belongs to the UbiA prenyltransferase family. Mg(2+) is required as a cofactor.

Its subcellular location is the membrane. It participates in secondary metabolite biosynthesis; terpenoid biosynthesis. In terms of biological role, olyprenyl transferase; part of the gene cluster that mediates the biosynthesis of the meroterpenoids nectripenoids A and B, as well as cochliquninone D and isocochliquninone E. The pathway probably begins with the HR-PKS ntnH that catalyzes two chain-extension steps to form a reduced triketide, which then primes the SAT domain in the NR-PKS ntnG to initiate three more cycles of extension to give a linear hexaketide corresponding to the polyketide part of nectripenoids. The FAD-dependent monooxygenase ntnJ then performs an oxidative decarboxylation at C11 of the ntnH/ntnG product, via an electrophilic aromatic hydroxylation with concomitant ipso-decarboxylation. The membrane-bound polyprenyl transferase ntnF then introduces a farnesyl group before the FAD-dependent monooxygenase ntnK functions as the first epoxidase on terminal C12'-C13' olefin, followed by a second epoxidation on C7'-C8' catalyzed by ntnA. The terpene cyclase/mutase ntnI then initiates the sequential tricyclic ring formation through protonation of the terminal epoxide and catalyzes the regioselective and stereoselective 6/6/6-tricyclic ring formation. The cytochrome P450 monooxygenase ntnM may then hydroxylate C1'. The protein is Polyprenyl transferase ntnF of Nectria sp.